Consider the following 224-residue polypeptide: MTEQVQANEAETLAAGADERIIRETGIDAKVASIIEPVINTLGFRLVRVRLSGLNGQTLQIMAERPDGTMTVDDCELVSRTVAPVLDVEDPISGKYHLEISSPGIDRPLVRKSDFADWAGHIAKVETSVVHEGRKKFRGRIVLGDAESVVIESDQISYGSEPVVRIPFDLISDARLVLTDDLIRDALRKDKALREGRIPGDDLGSEEAGEQSDETASGEAEDKE.

The interval 194 to 224 (REGRIPGDDLGSEEAGEQSDETASGEAEDKE) is disordered. Over residues 203-213 (LGSEEAGEQSD) the composition is skewed to acidic residues.

The protein belongs to the RimP family.

The protein resides in the cytoplasm. Functionally, required for maturation of 30S ribosomal subunits. This Brucella anthropi (strain ATCC 49188 / DSM 6882 / CCUG 24695 / JCM 21032 / LMG 3331 / NBRC 15819 / NCTC 12168 / Alc 37) (Ochrobactrum anthropi) protein is Ribosome maturation factor RimP.